The following is a 777-amino-acid chain: Cullin-3 (777 aa).

Residues 568–596 are disordered; it reads YPPPKASMSNEENGPGPSSSGESMKERKP. Over residues 576-589 the composition is skewed to low complexity; it reads SNEENGPGPSSSGE. The region spanning 707–769 is the Cullin neddylation domain; the sequence is DRKLEVEAAI…REYLARDEHD (63 aa). A Glycyl lysine isopeptide (Lys-Gly) (interchain with G-Cter in NEDD8) cross-link involves residue K721.

The protein belongs to the cullin family. As to quaternary structure, probable component of multiple cullin-RING-based BCB (BTB-CUL3-BTB) E3 ubiquitin-protein ligase complexes formed by cul-3, rbx-1 and a variable BTB domain-containing protein acting as both, adapter to cullin and substrate recognition component. Interacts with bath-15, bath-40, bath-41, bath-42, C17F4.8, tag-303, D2045.8, F57C2.1, ZC239.15 and B0281.5. Interacts with mel-26 (via BTB domain). Interacts with dcn-1. In terms of processing, neddylated. Deneddylated via its interaction with the COP9 signalosome (CSN) complex.

The protein resides in the cytoplasm. It is found in the nucleus. Its pathway is protein modification; protein ubiquitination. Functionally, probable core component of multiple cullin-RING-based BCB (BTB-CUL3-BTB) E3 ubiquitin-protein ligase complexes which mediate the ubiquitination and subsequent proteasomal degradation of target proteins. Probably acts as a scaffold protein which may contribute to catalysis through positioning of the substrate and the ubiquitin-conjugating enzyme. Required to target mei-3/katanin for degradation at the meiosis to mitosis transition via its neddylation and deneddylation. Functions in ubiquitin-mediated degradation of CKIs to target cki-1 for degradation. Regulates microtubule stability in the early embryo. In body wall muscles, involved in the organization of myosin thick filaments, likely by regulating the degradation of microtubule severing protein mei-1 downstream of unc-89. Together with spop-1, may promote the ubiquitination and proteasomal degradation of target bromodomain-containing proteins such as bet-1. The protein is Cullin-3 of Caenorhabditis elegans.